The following is a 198-amino-acid chain: Probable chorismate pyruvate-lyase (198 aa).

Residues R73, L111, and E172 each coordinate substrate.

Belongs to the UbiC family.

It is found in the cytoplasm. It catalyses the reaction chorismate = 4-hydroxybenzoate + pyruvate. It participates in cofactor biosynthesis; ubiquinone biosynthesis. Functionally, removes the pyruvyl group from chorismate, with concomitant aromatization of the ring, to provide 4-hydroxybenzoate (4HB) for the ubiquinone pathway. The chain is Probable chorismate pyruvate-lyase from Burkholderia orbicola (strain AU 1054).